A 441-amino-acid chain; its full sequence is uncharacterized protein (441 aa).

11 helical membrane passes run 62-82, 88-108, 112-132, 154-174, 192-212, 224-244, 247-267, 312-332, 335-355, 363-383, and 399-419; these read FLSL…FEIG, LILT…KLFG, IALT…IIAL, ALLH…LLVV, WMFF…YLLY, ALMI…GVAS, ANLS…YMVC, IVLF…ATFA, ISVM…IIFL, QGMW…NLLL, and ILCS…LLYA.

It is found in the membrane. This is an uncharacterized protein from Schizosaccharomyces pombe (strain 972 / ATCC 24843) (Fission yeast).